The sequence spans 259 residues: Imidazole glycerol phosphate synthase subunit HisF (259 aa).

Active-site residues include aspartate 11 and aspartate 130.

This sequence belongs to the HisA/HisF family. Heterodimer of HisH and HisF.

It is found in the cytoplasm. It carries out the reaction 5-[(5-phospho-1-deoxy-D-ribulos-1-ylimino)methylamino]-1-(5-phospho-beta-D-ribosyl)imidazole-4-carboxamide + L-glutamine = D-erythro-1-(imidazol-4-yl)glycerol 3-phosphate + 5-amino-1-(5-phospho-beta-D-ribosyl)imidazole-4-carboxamide + L-glutamate + H(+). The protein operates within amino-acid biosynthesis; L-histidine biosynthesis; L-histidine from 5-phospho-alpha-D-ribose 1-diphosphate: step 5/9. Functionally, IGPS catalyzes the conversion of PRFAR and glutamine to IGP, AICAR and glutamate. The HisF subunit catalyzes the cyclization activity that produces IGP and AICAR from PRFAR using the ammonia provided by the HisH subunit. This Desulforapulum autotrophicum (strain ATCC 43914 / DSM 3382 / VKM B-1955 / HRM2) (Desulfobacterium autotrophicum) protein is Imidazole glycerol phosphate synthase subunit HisF.